A 675-amino-acid chain; its full sequence is DNA ligase (675 aa).

Residues 35–39, 84–85, and glutamate 116 contribute to the NAD(+) site; these read DEAYD and SL. Residue lysine 118 is the N6-AMP-lysine intermediate of the active site. Residues arginine 139, glutamate 180, lysine 296, and lysine 320 each coordinate NAD(+). The Zn(2+) site is built by cysteine 414, cysteine 417, cysteine 432, and cysteine 437. One can recognise a BRCT domain in the interval 597 to 675; the sequence is PVDAFWNGKT…EREFLERLGM (79 aa).

Belongs to the NAD-dependent DNA ligase family. LigA subfamily. It depends on Mg(2+) as a cofactor. Mn(2+) is required as a cofactor.

The enzyme catalyses NAD(+) + (deoxyribonucleotide)n-3'-hydroxyl + 5'-phospho-(deoxyribonucleotide)m = (deoxyribonucleotide)n+m + AMP + beta-nicotinamide D-nucleotide.. DNA ligase that catalyzes the formation of phosphodiester linkages between 5'-phosphoryl and 3'-hydroxyl groups in double-stranded DNA using NAD as a coenzyme and as the energy source for the reaction. It is essential for DNA replication and repair of damaged DNA. The protein is DNA ligase of Syntrophobacter fumaroxidans (strain DSM 10017 / MPOB).